The chain runs to 126 residues: Aspartate 1-decarboxylase (126 aa).

The active-site Schiff-base intermediate with substrate; via pyruvic acid is the Ser25. Residue Ser25 is modified to Pyruvic acid (Ser). Thr57 serves as a coordination point for substrate. Tyr58 (proton donor) is an active-site residue. 73–75 (GAA) contacts substrate.

Belongs to the PanD family. In terms of assembly, heterooctamer of four alpha and four beta subunits. Pyruvate is required as a cofactor. Is synthesized initially as an inactive proenzyme, which is activated by self-cleavage at a specific serine bond to produce a beta-subunit with a hydroxyl group at its C-terminus and an alpha-subunit with a pyruvoyl group at its N-terminus.

It localises to the cytoplasm. The catalysed reaction is L-aspartate + H(+) = beta-alanine + CO2. Its pathway is cofactor biosynthesis; (R)-pantothenate biosynthesis; beta-alanine from L-aspartate: step 1/1. Catalyzes the pyruvoyl-dependent decarboxylation of aspartate to produce beta-alanine. This chain is Aspartate 1-decarboxylase, found in Escherichia coli O6:K15:H31 (strain 536 / UPEC).